The chain runs to 274 residues: D-aminopeptidase (274 aa).

Positions 8, 10, 60, and 104 each coordinate Zn(2+). Catalysis depends on histidine 115, which acts as the Nucleophile. A Zn(2+)-binding site is contributed by glutamate 133.

Belongs to the peptidase M55 family. As to quaternary structure, homodecamer. A 20 Angstroms wide channel runs through the complex, giving access to a central chamber holding the active sites. It depends on Zn(2+) as a cofactor.

In terms of biological role, hydrolyzes N-terminal residues in D-amino acid containing peptides. Among the tested substrates, the highest activities are with D-Ala-D-Ala and D-Ala-Gly-Gly. The physiological role is not clear. This chain is D-aminopeptidase (dppA), found in Bacillus subtilis (strain 168).